A 1204-amino-acid polypeptide reads, in one-letter code: DNA-directed RNA polymerase subunit beta' (1204 aa).

Positions 60, 62, 75, and 78 each coordinate Zn(2+). 3 residues coordinate Mg(2+): Asp449, Asp451, and Asp453. The Zn(2+) site is built by Cys819, Cys893, Cys900, and Cys903.

The protein belongs to the RNA polymerase beta' chain family. As to quaternary structure, the RNAP catalytic core consists of 2 alpha, 1 beta, 1 beta' and 1 omega subunit. When a sigma factor is associated with the core the holoenzyme is formed, which can initiate transcription. Mg(2+) is required as a cofactor. Zn(2+) serves as cofactor.

The enzyme catalyses RNA(n) + a ribonucleoside 5'-triphosphate = RNA(n+1) + diphosphate. Functionally, DNA-dependent RNA polymerase catalyzes the transcription of DNA into RNA using the four ribonucleoside triphosphates as substrates. The chain is DNA-directed RNA polymerase subunit beta' from Bacillus cytotoxicus (strain DSM 22905 / CIP 110041 / 391-98 / NVH 391-98).